A 462-amino-acid chain; its full sequence is Chitinase-like mite allergen Der p 18.0101 (462 aa).

Residues 1–25 (MTRLSFTVLIFLAAYFGSNIRPNVA) form the signal peptide. The region spanning 29–378 (PKTVCYYESW…HAINSNYFRG (350 aa)) is the GH18 domain. Cys-33 and Cys-58 are oxidised to a cystine. N-linked (GlcNAc...) asparagine glycans are attached at residues Asn-338 and Asn-441. The 59-residue stretch at 404–462 (VFHCHQEGFFRDKTYCAKYYECKKGDFGLEQTVHHCPNHSQAFDEVSRTCVDHAKIPGC) folds into the Chitin-binding type-2 domain. Cysteines 439 and 453 form a disulfide.

It belongs to the glycosyl hydrolase 18 family. Chitinase class II subfamily. As to expression, expressed in the peritrophic matrix of the midgut, and only very weakly in fecal pellets.

The protein resides in the secreted. Functionally, probably a non-catalytic chitinase-like protein, which binds to insoluble chitin and enhances the activity of the catalytic chitinases. Has weak chitin-binding activity. This chain is Chitinase-like mite allergen Der p 18.0101, found in Dermatophagoides pteronyssinus (European house dust mite).